The following is a 104-amino-acid chain: Small ribosomal subunit protein uS10 (104 aa).

The protein belongs to the universal ribosomal protein uS10 family. Part of the 30S ribosomal subunit.

Functionally, involved in the binding of tRNA to the ribosomes. The chain is Small ribosomal subunit protein uS10 from Alkaliphilus metalliredigens (strain QYMF).